The sequence spans 518 residues: Ent-cassadiene hydroxylase (518 aa).

Residues 6 to 26 (LILALGLSVLFVLLSKLVSSA) form a helical membrane-spanning segment. Residue cysteine 451 participates in heme binding.

This sequence belongs to the cytochrome P450 family. It depends on heme as a cofactor.

Its subcellular location is the membrane. It carries out the reaction ent-cassa-12,15-diene + 3 reduced [NADPH--hemoprotein reductase] + 3 O2 = ent-3beta-hydroxycassa-12,15-dien-2-one + 3 oxidized [NADPH--hemoprotein reductase] + 4 H2O + 3 H(+). Its function is as follows. Enzyme of the diterpenoid metabolism involved in the biosynthesis of antibacterial oryzalides such as phytocassane. Catalyzes the hydroxylation of ent-cassa-12,15-diene to form ent-3beta-hydroxycassa-12,15-dien-2-one. The chain is Ent-cassadiene hydroxylase (CYP71Z7) from Oryza sativa subsp. japonica (Rice).